A 296-amino-acid chain; its full sequence is Guided entry of tail-anchored proteins factor CAMLG (296 aa).

Residues 1-79 (MESMAVATDG…SDKLNSLSVP (79 aa)) are disordered. Over 1 to 189 (MESMAVATDG…NTTEEFDSFR (189 aa)) the chain is Cytoplasmic. Serine 55 carries the phosphoserine modification. Over residues 61–72 (SQTKSKQQDSDK) the composition is skewed to basic and acidic residues. Residues 190–207 (IFRLVGCALLALGVRAFV) traverse the membrane as a helical segment. The Lumenal portion of the chain corresponds to 208-212 (CKYLS). The cysteines at positions 208 and 284 are disulfide-linked. The chain crosses the membrane as a helical span at residues 213–231 (IFAPFLTLQLAYMGLYKYF). The Cytoplasmic segment spans residues 232-269 (PKSEKKIKTTVLTAALLLSGIPAEVINRSMDTYSKMGE). Residues 270–288 (VFTDLCVYFFTFIFCHELL) form a helical membrane-spanning segment. The Lumenal portion of the chain corresponds to 289–296 (DYWGSEVP).

Component of the Golgi to ER traffic (GET) complex, which is composed of GET1/WRB, CAMLG/GET2 and GET3/TRC40. Within the complex, GET1 and CAMLG form a heterotetramer which is stabilized by phosphatidylinositol binding and which binds to the GET3 homodimer. Interacts (via C-terminus) with GET1. Interacts (via N-terminus) with GET3. GET3 shows a higher affinity for CAMLG than for GET1. Interacts (via N-terminus) with TNFRSF13B/TACI (via C-terminus). In terms of assembly, (Microbial infection) Interacts with human herpes virus 8/HHV-8 protein K7; this interaction modulates intracellular calcium concentration. As to expression, ubiquitous. Highest levels in brain, testis and ovary.

Its subcellular location is the endoplasmic reticulum membrane. Its function is as follows. Required for the post-translational delivery of tail-anchored (TA) proteins to the endoplasmic reticulum. Together with GET1/WRB, acts as a membrane receptor for soluble GET3/TRC40, which recognizes and selectively binds the transmembrane domain of TA proteins in the cytosol. Required for the stability of GET1. Stimulates calcium signaling in T cells through its involvement in elevation of intracellular calcium. Essential for the survival of peripheral follicular B cells. In Homo sapiens (Human), this protein is Guided entry of tail-anchored proteins factor CAMLG.